We begin with the raw amino-acid sequence, 321 residues long: Cytochrome f (321 aa).

An N-terminal signal peptide occupies residues 1–35; the sequence is MQNRNKNNWMKKWVIRSISILIILNIIAWPSISYA. Positions 36, 56, 59, and 60 each coordinate heme. Residues 287-306 form a helical membrane-spanning segment; that stretch reads IQGLLLFFVSVIMAQILLVL.

It belongs to the cytochrome f family. As to quaternary structure, the 4 large subunits of the cytochrome b6-f complex are cytochrome b6, subunit IV (17 kDa polypeptide, petD), cytochrome f and the Rieske protein, while the 4 small subunits are PetG, PetL, PetM and PetN. The complex functions as a dimer. Requires heme as cofactor.

It is found in the plastid. The protein resides in the chloroplast thylakoid membrane. Its function is as follows. Component of the cytochrome b6-f complex, which mediates electron transfer between photosystem II (PSII) and photosystem I (PSI), cyclic electron flow around PSI, and state transitions. This is Cytochrome f from Psilotum nudum (Whisk fern).